Consider the following 357-residue polypeptide: 3-isopropylmalate dehydrogenase (357 aa).

The substrate site is built by Arg-97, Arg-107, Arg-135, and Asp-224. 3 residues coordinate Mg(2+): Asp-224, Asp-248, and Asp-252. Position 282–294 (282–294 (GSAPDIAGQDKAN)) interacts with NAD(+).

This sequence belongs to the isocitrate and isopropylmalate dehydrogenases family. LeuB type 1 subfamily. In terms of assembly, homodimer. Mg(2+) is required as a cofactor. It depends on Mn(2+) as a cofactor.

The protein resides in the cytoplasm. It catalyses the reaction (2R,3S)-3-isopropylmalate + NAD(+) = 4-methyl-2-oxopentanoate + CO2 + NADH. The protein operates within amino-acid biosynthesis; L-leucine biosynthesis; L-leucine from 3-methyl-2-oxobutanoate: step 3/4. Catalyzes the oxidation of 3-carboxy-2-hydroxy-4-methylpentanoate (3-isopropylmalate) to 3-carboxy-4-methyl-2-oxopentanoate. The product decarboxylates to 4-methyl-2 oxopentanoate. This Synechococcus sp. (strain CC9605) protein is 3-isopropylmalate dehydrogenase.